The primary structure comprises 173 residues: MTLDVFTKVVSQADSRGEFLSNEQLDALANVVKEGNKRLDVVNRITSNASAIVTNAARALFEEQPQLIAPGGNAYTNRRMAACLRDMEIILRYVTYAILAGDASVLDDRCLNGLRETYQALGTPGSSVAVGVQKMKDAAVGIANDPNGITKGDCSQLISEVASYFDRAAAAVG.

Position 73 is an N4-methylasparagine (Asn73). 2 residues coordinate (2R,3E)-phycocyanobilin: Cys83 and Cys154.

This sequence belongs to the phycobiliprotein family. In terms of assembly, heterodimer of an alpha and a beta subunit. Part of 2 PBS rod complexes, the conventional PBS rod and a photosystem I-specific CpcL-PBS rod. Contains two covalently linked bilin chromophores.

The protein localises to the cellular thylakoid membrane. Light-harvesting photosynthetic bile pigment-protein from the phycobiliprotein complex (phycobilisome, PBS). Phycocyanin is the major phycobiliprotein in the PBS rod. This is C-phycocyanin beta subunit (cpcB) from Nostoc sp. (strain PCC 7120 / SAG 25.82 / UTEX 2576).